Reading from the N-terminus, the 345-residue chain is uncharacterized protein (345 aa).

Residue methionine 1 is a domain, TBDR plug. Positions 1–345 (MDLGPIYNTR…EVILNTKIEF (345 aa)) constitute a TBDR beta-barrel domain. Positions 328–345 (PVALGYAREVILNTKIEF) match the TonB C-terminal box motif.

The protein belongs to the TonB-dependent receptor family.

The protein resides in the cell outer membrane. This is an uncharacterized protein from Haemophilus influenzae (strain ATCC 51907 / DSM 11121 / KW20 / Rd).